The following is a 907-amino-acid chain: Catenin alpha-1 (907 aa).

T2 carries the N-acetylthreonine modification. Residues 2 to 228 (TAVHAGNINF…PILYTASQAC (227 aa)) form an involved in homodimerization region. A Glycyl lysine isopeptide (Lys-Gly) (interchain with G-Cter in SUMO2) cross-link involves residue K57. The interaction with JUP and CTNNB1 stretch occupies residues 97–148 (VRKQGDLMKSAAGEFADDPCSSVKRGNMVRAARALLSAVTRLLILADMADVY). 4 positions are modified to phosphoserine: S264, S268, S296, and S298. The interaction with alpha-actinin stretch occupies residues 326 to 395 (TRDDRRERIV…AVMDHVSDSF (70 aa)). Residue T635 is modified to Phosphothreonine. S642 bears the Phosphoserine mark. T646 carries the post-translational modification Phosphothreonine. 2 positions are modified to phosphoserine: S653 and S656. A Phosphothreonine modification is found at T659. K798 participates in a covalent cross-link: Glycyl lysine isopeptide (Lys-Gly) (interchain with G-Cter in SUMO2). The residue at position 852 (S852) is a Phosphoserine. Residues 865–881 (PEKKPLVKREKQDETQT) show a composition bias toward basic and acidic residues. Residues 865-895 (PEKKPLVKREKQDETQTKIKRASQKKHVNPV) form a disordered region. Residues 882–892 (KIKRASQKKHV) show a composition bias toward basic residues.

The protein belongs to the vinculin/alpha-catenin family. In terms of assembly, monomer and homodimer; the monomer preferentially binds to CTNNB1 and the homodimer to actin. Component of an cadherin:catenin adhesion complex composed of at least of CDH26, beta-catenin/CTNNB1, alpha-catenin/CTNNA1 and p120 catenin/CTNND1. Possible component of an E-cadherin/ catenin adhesion complex together with E-cadherin/CDH1 and beta-catenin/CTNNB1 or gamma-catenin/JUP; the complex is located to adherens junctions. The stable association of CTNNA1 is controversial as CTNNA1 was shown not to bind to F-actin when assembled in the complex. Alternatively, the CTNNA1-containing complex may be linked to F-actin by other proteins such as LIMA1. Binds AFDN and F-actin. Interacts with ARHGAP21. Interacts with AJUBA. Interacts with LIMA1. Interacts with vinculin/VCL. Interacts with TJP2/ZO2 (via N-terminus). Interacts with TJP1/ZO1 (via N-terminus). Post-translationally, sumoylated. In terms of processing, phosphorylation seems to contribute to the strength of cell-cell adhesion rather than to the basic capacity for cell-cell adhesion.

It is found in the cytoplasm. The protein resides in the cytoskeleton. It localises to the cell junction. The protein localises to the adherens junction. Its subcellular location is the cell membrane. It is found in the nucleus. Functionally, associates with the cytoplasmic domain of a variety of cadherins. The association of catenins to cadherins produces a complex which is linked to the actin filament network, and which seems to be of primary importance for cadherins cell-adhesion properties. Can associate with both E- and N-cadherins. Originally believed to be a stable component of E-cadherin/catenin adhesion complexes and to mediate the linkage of cadherins to the actin cytoskeleton at adherens junctions. In contrast, cortical actin was found to be much more dynamic than E-cadherin/catenin complexes and CTNNA1 was shown not to bind to F-actin when assembled in the complex suggesting a different linkage between actin and adherens junctions components. The homodimeric form may regulate actin filament assembly and inhibit actin branching by competing with the Arp2/3 complex for binding to actin filaments. Involved in the regulation of WWTR1/TAZ, YAP1 and TGFB1-dependent SMAD2 and SMAD3 nuclear accumulation. May play a crucial role in cell differentiation. The protein is Catenin alpha-1 of Oryctolagus cuniculus (Rabbit).